Consider the following 146-residue polypeptide: Protein ADM2 (146 aa).

The signal sequence occupies residues Met-1–Ser-25. The propeptide occupies Gly-26 to Ser-96. The interval Gly-29 to Pro-99 is disordered. A disulfide bridge connects residues Cys-108 and Cys-113. Residue Tyr-145 is modified to Tyrosine amide.

It belongs to the adrenomedullin family. Expression was restricted to the intermediate and anterior lobes of the pituitary.

It is found in the secreted. Its function is as follows. Intermedin/ADM2 is a peptide hormone that plays a role as physiological regulator of gastrointestinal and cardiovascular bioactivities mediated by the CALCRL-RAMPs receptor complexes. Activates the cAMP-dependent pathway through interaction with CALCRL-RAMP3 receptor complex. This Rattus norvegicus (Rat) protein is Protein ADM2.